We begin with the raw amino-acid sequence, 125 residues long: Aspartate 1-decarboxylase (125 aa).

The Schiff-base intermediate with substrate; via pyruvic acid role is filled by serine 25. Pyruvic acid (Ser) is present on serine 25. Position 57 (threonine 57) interacts with substrate. The active-site Proton donor is the tyrosine 58. 73 to 75 is a substrate binding site; that stretch reads GAA.

It belongs to the PanD family. In terms of assembly, heterooctamer of four alpha and four beta subunits. Pyruvate is required as a cofactor. Post-translationally, is synthesized initially as an inactive proenzyme, which is activated by self-cleavage at a specific serine bond to produce a beta-subunit with a hydroxyl group at its C-terminus and an alpha-subunit with a pyruvoyl group at its N-terminus.

Its subcellular location is the cytoplasm. The catalysed reaction is L-aspartate + H(+) = beta-alanine + CO2. The protein operates within cofactor biosynthesis; (R)-pantothenate biosynthesis; beta-alanine from L-aspartate: step 1/1. In terms of biological role, catalyzes the pyruvoyl-dependent decarboxylation of aspartate to produce beta-alanine. In Herpetosiphon aurantiacus (strain ATCC 23779 / DSM 785 / 114-95), this protein is Aspartate 1-decarboxylase.